The following is a 1116-amino-acid chain: ELKS/Rab6-interacting/CAST family member 1 (1116 aa).

A disordered region spans residues 1–54 (MYGSARSVGKVEPSSQSPGRSPRLPRSPRLGHRRTNSTGGSSGSSVGGGSGKTL). Lysine 10 is subject to N6-acetyllysine. Residues 13 to 28 (PSSQSPGRSPRLPRSP) show a composition bias toward low complexity. Serine 17, serine 21, and serine 37 each carry phosphoserine. Position 38 is a phosphothreonine (threonine 38). A compositionally biased stretch (gly residues) spans 40-51 (GSSGSSVGGGSG). Phosphoserine occurs at positions 55, 75, and 94. A coiled-coil region spans residues 144-988 (RQARDNTIMD…RMKLMADNYE (845 aa)). Residues 590–602 (KEKQMSSLKERVK) are compositionally biased toward basic and acidic residues. Disordered stretches follow at residues 590–609 (KEKQMSSLKERVKSLQADTT) and 814–836 (ARRREDNLNDSSQQLQDSLRKKD). Position 1005 is a phosphoserine (serine 1005). Threonine 1046 carries the phosphothreonine modification. The 63-residue stretch at 1046-1108 (TPPASYNLDD…DHCPDILEQV (63 aa)) folds into the FIP-RBD domain. A coiled-coil region spans residues 1060–1100 (WENELQKMTRGQLQDELEKGERDNAELQEFANAILQQIADH).

Part of a complex with CHUK, IKBKB and IKBKG. Interacts with CHUK, IKBKB and IKBKG. The interaction with IKBKG is independent of CHUK and IKBKB. Interacts with NFKBIA. Isoform 4 interacts with PPFIA1, and through its C-terminus with the PDZ domains of RIMS1 and RIMS2. Interacts with ERC2/CAST1. Interacts with the GTB-bound forms of RAB6A isoform 1 and isoform 2 and with RAB6B. The interaction was strongest with RAB6B, followed by RAB6A isoform 2 and weakest with RAB6A isoform 1. Interacts with SDCCAG8. Part of a cortical microtubule stabilization complex (CMSC) composed of KANK1, PPFIA1, PPFIBP1, ERC1/ELKS, PHLDB2/LL5beta, CLASPs, KIF21A and possibly additional interactors; within CMSCs KANK1 and PHLDB2/LL5beta appear to be the core components for targeting of microtubule-binding proteins KIF21A and CLASPs, whereas PPFIA1, PPFIBP1 and ERC1/ELKS serve as scaffolds for protein clustering. As to expression, widely expressed. Isoform 2 and isoform 4 are abundantly expressed in brain. Isoform 1 and isoform 3 are predominantly expressed in testis and thyroid, and isoform 1 predominates in other tissues tested.

It is found in the cytoplasm. The protein resides in the cytoskeleton. The protein localises to the microtubule organizing center. It localises to the centrosome. Its subcellular location is the membrane. It is found in the golgi apparatus membrane. The protein resides in the presynaptic cell membrane. The protein localises to the cell projection. It localises to the podosome. Its function is as follows. Regulatory subunit of the IKK complex. Probably recruits IkappaBalpha/NFKBIA to the complex. May be involved in the organization of the cytomatrix at the nerve terminals active zone (CAZ) which regulates neurotransmitter release. May be involved in vesicle trafficking at the CAZ. May be involved in Rab-6 regulated endosomes to Golgi transport. This Homo sapiens (Human) protein is ELKS/Rab6-interacting/CAST family member 1 (ERC1).